Reading from the N-terminus, the 453-residue chain is Chromosomal replication initiator protein DnaA (453 aa).

Positions 1–71 (MSEKEIWEKV…QAILFDVVGY (71 aa)) are domain I, interacts with DnaA modulators. The tract at residues 71-114 (YEVKPHFITTEELANYSNNETATPKETTKPSTETTEDNHVLGRE) is domain II. A domain III, AAA+ region region spans residues 115 to 331 (QFNAHNTFDT…GALTRLLAYS (217 aa)). Residues glycine 159, glycine 161, lysine 162, and threonine 163 each coordinate ATP. A domain IV, binds dsDNA region spans residues 332–453 (QLLGKPITTE…ENLEKEIRNV (122 aa)).

Belongs to the DnaA family. Oligomerizes as a right-handed, spiral filament on DNA at oriC.

The protein resides in the cytoplasm. Functionally, plays an essential role in the initiation and regulation of chromosomal replication. ATP-DnaA binds to the origin of replication (oriC) to initiate formation of the DNA replication initiation complex once per cell cycle. Binds the DnaA box (a 9 base pair repeat at the origin) and separates the double-stranded (ds)DNA. Forms a right-handed helical filament on oriC DNA; dsDNA binds to the exterior of the filament while single-stranded (ss)DNA is stabiized in the filament's interior. The ATP-DnaA-oriC complex binds and stabilizes one strand of the AT-rich DNA unwinding element (DUE), permitting loading of DNA polymerase. After initiation quickly degrades to an ADP-DnaA complex that is not apt for DNA replication. Binds acidic phospholipids. The chain is Chromosomal replication initiator protein DnaA from Staphylococcus aureus (strain Mu3 / ATCC 700698).